A 981-amino-acid chain; its full sequence is Transcription factor TAC1 (981 aa).

A compositionally biased stretch (polar residues) spans 1–29 (MDTSSSSGTHPSTFNNLTKQQELTGNDPN). Positions 1 to 33 (MDTSSSSGTHPSTFNNLTKQQELTGNDPNDTNR) are disordered. A DNA-binding region (zn(2)-C6 fungal-type) is located at residues 40–68 (CDSCRRKKIKCNGSYPCGNCIQAKNTSNC). Disordered stretches follow at residues 74-106 (PVRKKLKPTKQDNKSTANSNGVSKRKYNDTFSG), 165-199 (HSNSSMFNNNSLSPTPSEDFNKSAFDSEEQQTSHS), and 868-902 (LRDNSTNHGQNNMNPSPTITNNTYNSNINTGSNST). Residues 165–177 (HSNSSMFNNNSLS) show a composition bias toward low complexity. The span at 868-880 (LRDNSTNHGQNNM) shows a compositional bias: polar residues. Residues 881 to 902 (NPSPTITNNTYNSNINTGSNST) show a composition bias toward low complexity.

Post-translationally, phosphorylated. Phosphorylation leads to hyperactivation.

It is found in the nucleus. Drugs such as farnesol and 1-dodecanol are able to hyperactivate TAC1 probably via phosphorylation by the Mediator complex. Its function is as follows. Transcriptional activator of drug-responsive genes including the ABC-type transporters CDR1 and CDR2, as well as HSP12 and RTA3. Binds the cis-acting regulatory drug-responsive elements (DREs) with the consensus sequence 5'-CGGAWATCGGATATTTTTTT-3' in the promoters of target genes. This is Transcription factor TAC1 from Candida albicans (strain SC5314 / ATCC MYA-2876) (Yeast).